Reading from the N-terminus, the 908-residue chain is Flap endonuclease GEN homolog 1 (908 aa).

The interval 2–96 is XPG-N domain; it reads GVNDLWQILE…SKRNQSRYGS (95 aa). Residues D30, E75, E134, E136, D155, D157, and D208 each contribute to the Mg(2+) site. The interval 122–208 is XPG-I domain; sequence ECLGIPWVQA…VGLAILLGCD (87 aa). Residues 208–384 are 5'-3' exonuclease domain; it reads DYLPKGVPGV…LLVLLTHYDM (177 aa). Residues 390–464 form a chromodomain region; the sequence is GSRNSNQLQP…VYQKQKLEIK (75 aa). 2 positions are modified to phosphoserine: S801 and S802.

It belongs to the XPG/RAD2 endonuclease family. GEN subfamily. In terms of assembly, largely monomeric, dimerizes on the Holliday junction and the first nick occurs upon dimerization at the junction. Mg(2+) is required as a cofactor.

Its subcellular location is the nucleus. Functionally, endonuclease which resolves Holliday junctions (HJs) by the introduction of symmetrically related cuts across the junction point, to produce nicked duplex products in which the nicks can be readily ligated. Four-way DNA intermediates, also known as Holliday junctions, are formed during homologous recombination and DNA repair, and their resolution is necessary for proper chromosome segregation. Cleaves HJs by a nick and counter-nick mechanism involving dual coordinated incisions that lead to the formation of ligatable nicked duplex products. Cleavage of the first strand is rate limiting, while second strand cleavage is rapid. Largely monomeric, dimerizes on the HJ and the first nick occurs upon dimerization at the junction. Efficiently cleaves both single and double HJs contained within large recombination intermediates. Exhibits a weak sequence preference for incision between two G residues that reside in a T-rich region of DNA. Also has endonuclease activity on 5'-flap and replication fork (RF) DNA substrates. The chain is Flap endonuclease GEN homolog 1 (GEN1) from Homo sapiens (Human).